An 84-amino-acid chain; its full sequence is RQC P-site tRNA stabilizing factor (84 aa).

The S4 RNA-binding domain occupies 1 to 64 (MRIDKFLQSV…IEEYTILQIP (64 aa)).

The protein belongs to the RqcP family. As to quaternary structure, associates with stalled 50S ribosomal subunits. Binds to RqcH, 23S rRNA and the P-site tRNA. Does not require RqcH for association with 50S subunits.

Functionally, key component of the ribosome quality control system (RQC), a ribosome-associated complex that mediates the extraction of incompletely synthesized nascent chains from stalled ribosomes and their subsequent degradation. RqcH recruits Ala-charged tRNA, and with RqcP directs the elongation of stalled nascent chains on 50S ribosomal subunits, leading to non-templated C-terminal alanine extensions (Ala tail). The Ala tail promotes nascent chain degradation. RqcP is associated with the translocation-like movement of the peptidyl-tRNA from the A-site into the P-site. This chain is RQC P-site tRNA stabilizing factor, found in Helicobacter pylori (strain J99 / ATCC 700824) (Campylobacter pylori J99).